A 66-amino-acid chain; its full sequence is DNA-directed RNA polymerase subunit Rpo10 (66 aa).

Positions 7, 10, 44, and 45 each coordinate Zn(2+).

Belongs to the archaeal Rpo10/eukaryotic RPB10 RNA polymerase subunit family. As to quaternary structure, part of the RNA polymerase complex. Zn(2+) is required as a cofactor.

It is found in the cytoplasm. It catalyses the reaction RNA(n) + a ribonucleoside 5'-triphosphate = RNA(n+1) + diphosphate. DNA-dependent RNA polymerase (RNAP) catalyzes the transcription of DNA into RNA using the four ribonucleoside triphosphates as substrates. The polypeptide is DNA-directed RNA polymerase subunit Rpo10 (Pyrobaculum neutrophilum (strain DSM 2338 / JCM 9278 / NBRC 100436 / V24Sta) (Thermoproteus neutrophilus)).